A 233-amino-acid polypeptide reads, in one-letter code: Uridylate kinase (233 aa).

Residue 7 to 10 (KISG) participates in ATP binding. A UMP-binding site is contributed by glycine 49. Glycine 50 and arginine 54 together coordinate ATP. UMP-binding positions include aspartate 68 and 129-136 (TGNPFFTT). 3 residues coordinate ATP: threonine 156, tyrosine 162, and aspartate 165.

This sequence belongs to the UMP kinase family. Homohexamer.

The protein localises to the cytoplasm. The enzyme catalyses UMP + ATP = UDP + ADP. Its pathway is pyrimidine metabolism; CTP biosynthesis via de novo pathway; UDP from UMP (UMPK route): step 1/1. Inhibited by UTP. In terms of biological role, catalyzes the reversible phosphorylation of UMP to UDP. The sequence is that of Uridylate kinase from Neorickettsia sennetsu (strain ATCC VR-367 / Miyayama) (Ehrlichia sennetsu).